Reading from the N-terminus, the 319-residue chain is Mitochondrial thiamine pyrophosphate carrier 1 (319 aa).

Solcar repeat units follow at residues 12-110 (GQRY…VTQS), 121-207 (PQPA…VRVP), and 214-309 (PFGS…VLKI). Helical transmembrane passes span 17-35 (VVAAGAIAGMVSRFCVAPL), 91-107 (LLYIFYGAIQFTTYRTV), 127-147 (FVSGATAGGIGTFTTYPFDLL), 182-201 (GVSAAVAQIVPYMGLFFATY), 221-237 (TAGVIASVIAKTGVFPL), and 284-301 (GLTVSLIKAAPASAVTMW).

This sequence belongs to the mitochondrial carrier (TC 2.A.29) family.

The protein resides in the mitochondrion inner membrane. In terms of biological role, mitochondrial transporter that mediates uptake of thiamine pyrophosphate (ThPP) into mitochondria. The polypeptide is Mitochondrial thiamine pyrophosphate carrier 1 (TPC1) (Coccidioides immitis (strain RS) (Valley fever fungus)).